Reading from the N-terminus, the 226-residue chain is Enolase-phosphatase E1 (226 aa).

It belongs to the HAD-like hydrolase superfamily. MasA/MtnC family. Monomer. It depends on Mg(2+) as a cofactor.

The enzyme catalyses 5-methylsulfanyl-2,3-dioxopentyl phosphate + H2O = 1,2-dihydroxy-5-(methylsulfanyl)pent-1-en-3-one + phosphate. It participates in amino-acid biosynthesis; L-methionine biosynthesis via salvage pathway; L-methionine from S-methyl-5-thio-alpha-D-ribose 1-phosphate: step 3/6. Its pathway is amino-acid biosynthesis; L-methionine biosynthesis via salvage pathway; L-methionine from S-methyl-5-thio-alpha-D-ribose 1-phosphate: step 4/6. Its function is as follows. Bifunctional enzyme that catalyzes the enolization of 2,3-diketo-5-methylthiopentyl-1-phosphate (DK-MTP-1-P) into the intermediate 2-hydroxy-3-keto-5-methylthiopentenyl-1-phosphate (HK-MTPenyl-1-P), which is then dephosphorylated to form the acireductone 1,2-dihydroxy-3-keto-5-methylthiopentene (DHK-MTPene). The chain is Enolase-phosphatase E1 from Shewanella frigidimarina (strain NCIMB 400).